Reading from the N-terminus, the 166-residue chain is Ribosome maturation factor RimM (166 aa).

A PRC barrel domain is found at 94–166 (EGEYYLGKLI…IELKVLDLLK (73 aa)).

It belongs to the RimM family. Binds ribosomal protein uS19.

It is found in the cytoplasm. Its function is as follows. An accessory protein needed during the final step in the assembly of 30S ribosomal subunit, possibly for assembly of the head region. Essential for efficient processing of 16S rRNA. May be needed both before and after RbfA during the maturation of 16S rRNA. It has affinity for free ribosomal 30S subunits but not for 70S ribosomes. This is Ribosome maturation factor RimM from Borreliella burgdorferi (strain ATCC 35210 / DSM 4680 / CIP 102532 / B31) (Borrelia burgdorferi).